We begin with the raw amino-acid sequence, 362 residues long: MTMRIFNFSPGPATLPEPVLRQAQAEMLEWNAVGASVMEISHRSAEFIALAKGIESDLRCLLGVPDDYAVLFLSGGATTQQALLPLNFAAPGQTADYVVTGHWSKTALKQASPYVNINVVADGERDGFQDIPNRAGWRLSKDAAYVHMTANETIHGVEFRQTPDVGDVPLFADFSSSIAADLIDVSKYDLIYAGAQKNLGPVGICVVIVRRTLLERTGQPRADIFTYASHAERDSMLNTPPTFNWYLLGLTVKWMLAEGGVQEFARRNQAKAQLVYQTIDQSGGFYRNGVAAAVRSRMNIPFFLPNVEQDARFAAEAKAAGLLSLKGHKAVGGIRASLYNAMPLAGVQALVAFMHDFQQRYG.

Residue arginine 43 coordinates L-glutamate. Pyridoxal 5'-phosphate is bound by residues 77–78, tryptophan 103, threonine 153, aspartate 173, and glutamine 196; that span reads AT. Lysine 197 is subject to N6-(pyridoxal phosphate)lysine. 238 to 239 is a pyridoxal 5'-phosphate binding site; that stretch reads NT.

This sequence belongs to the class-V pyridoxal-phosphate-dependent aminotransferase family. SerC subfamily. Homodimer. It depends on pyridoxal 5'-phosphate as a cofactor.

It localises to the cytoplasm. It catalyses the reaction O-phospho-L-serine + 2-oxoglutarate = 3-phosphooxypyruvate + L-glutamate. It carries out the reaction 4-(phosphooxy)-L-threonine + 2-oxoglutarate = (R)-3-hydroxy-2-oxo-4-phosphooxybutanoate + L-glutamate. Its pathway is amino-acid biosynthesis; L-serine biosynthesis; L-serine from 3-phospho-D-glycerate: step 2/3. The protein operates within cofactor biosynthesis; pyridoxine 5'-phosphate biosynthesis; pyridoxine 5'-phosphate from D-erythrose 4-phosphate: step 3/5. Catalyzes the reversible conversion of 3-phosphohydroxypyruvate to phosphoserine and of 3-hydroxy-2-oxo-4-phosphonooxybutanoate to phosphohydroxythreonine. This is Phosphoserine aminotransferase from Xylella fastidiosa (strain Temecula1 / ATCC 700964).